Reading from the N-terminus, the 277-residue chain is Sulfate transport system permease protein CysT (277 aa).

Transmembrane regions (helical) follow at residues 17–37, 64–84, 99–119, 136–156, 185–205, 215–235, and 243–263; these read LGTSLLFVCLILLLPLSALVM, LLSAFVASIFNGVFGLLMAWI, LMDLPFALPTAVAGLTLASLF, VTYTWLGIAVAMAFTSIPFVV, FCKVVLPELSPALVAGVALSF, VIFIAGNIAWKTEVTSLMIFV, and PAASAIASVILAASLLLLFSI. The region spanning 60–263 is the ABC transmembrane type-1 domain; that stretch reads YKVTLLSAFV…AASLLLLFSI (204 aa).

This sequence belongs to the binding-protein-dependent transport system permease family. CysTW subfamily. The complex is composed of two ATP-binding proteins (CysA), two transmembrane proteins (CysT and CysW) and a solute-binding protein (CysP).

The protein localises to the cell inner membrane. Functionally, part of the ABC transporter complex CysAWTP (TC 3.A.1.6.1) involved in sulfate/thiosulfate import. Probably responsible for the translocation of the substrate across the membrane. The polypeptide is Sulfate transport system permease protein CysT (cysU) (Escherichia coli (strain K12)).